The primary structure comprises 162 residues: UPF0114 protein PSEEN0819 (162 aa).

Transmembrane regions (helical) follow at residues 15–35 (LLAP…LKFF), 53–73 (LVLV…LVMV), and 136–156 (LMWY…MGYL).

This sequence belongs to the UPF0114 family.

Its subcellular location is the cell membrane. This Pseudomonas entomophila (strain L48) protein is UPF0114 protein PSEEN0819.